A 159-amino-acid polypeptide reads, in one-letter code: Putative phosphatidylinositol-3-phosphatase (159 aa).

A signal peptide spans Met-1–Gly-16. 4 helical membrane-spanning segments follow: residues Leu-30–Trp-50, Ala-54–Trp-74, Trp-104–Val-124, and Val-134–Ala-154.

Its subcellular location is the membrane. It catalyses the reaction a 1,2-diacyl-sn-glycero-3-phospho-(1D-myo-inositol-3-phosphate) + H2O = a 1,2-diacyl-sn-glycero-3-phospho-(1D-myo-inositol) + phosphate. May be responsible for the conversion of phosphatidylinositol phosphate diacylglycerol (PIP-DAG) to phosphatidylinositol diacylglycerol (PI-DAG), making it a key enzyme in the inositol glycerophospholipid biosynthesis pathway. The chain is Putative phosphatidylinositol-3-phosphatase from Bacteroides thetaiotaomicron (strain ATCC 29148 / DSM 2079 / JCM 5827 / CCUG 10774 / NCTC 10582 / VPI-5482 / E50).